The chain runs to 448 residues: Homogentisate 1,2-dioxygenase (448 aa).

His303 acts as the Proton acceptor in catalysis. His346 and Glu352 together coordinate Fe cation. Tyr361 and His382 together coordinate homogentisate. His382 is a binding site for Fe cation.

Belongs to the homogentisate dioxygenase family. Hexamer; dimer of trimers. It depends on Fe cation as a cofactor.

It catalyses the reaction homogentisate + O2 = 4-maleylacetoacetate + H(+). The protein operates within amino-acid degradation; L-phenylalanine degradation; acetoacetate and fumarate from L-phenylalanine: step 4/6. Involved in the catabolism of homogentisate (2,5-dihydroxyphenylacetate or 2,5-OH-PhAc), a central intermediate in the degradation of phenylalanine and tyrosine. Catalyzes the oxidative ring cleavage of the aromatic ring of homogentisate to yield maleylacetoacetate. This chain is Homogentisate 1,2-dioxygenase, found in Rhodopseudomonas palustris (strain TIE-1).